The following is a 312-amino-acid chain: Homoserine O-succinyltransferase (312 aa).

Catalysis depends on cysteine 142, which acts as the Acyl-thioester intermediate. Positions 163 and 192 each coordinate substrate. Histidine 235 serves as the catalytic Proton acceptor. Glutamate 237 is a catalytic residue. Arginine 249 is a substrate binding site.

It belongs to the MetA family.

Its subcellular location is the cytoplasm. It carries out the reaction L-homoserine + succinyl-CoA = O-succinyl-L-homoserine + CoA. The protein operates within amino-acid biosynthesis; L-methionine biosynthesis via de novo pathway; O-succinyl-L-homoserine from L-homoserine: step 1/1. Functionally, transfers a succinyl group from succinyl-CoA to L-homoserine, forming succinyl-L-homoserine. This is Homoserine O-succinyltransferase from Shewanella halifaxensis (strain HAW-EB4).